A 608-amino-acid chain; its full sequence is DNA mismatch repair protein MutL (608 aa).

Belongs to the DNA mismatch repair MutL/HexB family.

This protein is involved in the repair of mismatches in DNA. It is required for dam-dependent methyl-directed DNA mismatch repair. May act as a 'molecular matchmaker', a protein that promotes the formation of a stable complex between two or more DNA-binding proteins in an ATP-dependent manner without itself being part of a final effector complex. In Anaeromyxobacter dehalogenans (strain 2CP-C), this protein is DNA mismatch repair protein MutL.